A 132-amino-acid polypeptide reads, in one-letter code: Outer membrane protein RomA (132 aa).

To M.tuberculosis Rv0906.

The protein localises to the cell outer membrane. The protein is Outer membrane protein RomA (romA) of Klebsiella pneumoniae.